The sequence spans 49 residues: IgW transmembrane form Tm2T7/Tm7T7/Tm3T3 (49 aa).

The N-linked (GlcNAc...) asparagine glycan is linked to Asn-3. The helical transmembrane segment at 25–45 threads the bilayer; that stretch reads VAAFAILFILSFLYSTFVTVV.

Expressed in the spleen. May also be expressed in other lymphoid tissues.

The protein localises to the membrane. The sequence is that of IgW transmembrane form Tm2T7/Tm7T7/Tm3T3 from Heterodontus francisci (Horn shark).